A 69-amino-acid chain; its full sequence is DNA-directed RNA polymerase subunit epsilon (69 aa).

The protein belongs to the RNA polymerase subunit epsilon family. As to quaternary structure, RNAP is composed of a core of 2 alpha, a beta and a beta' subunit. The core is associated with a delta subunit, and at least one of epsilon or omega. When a sigma factor is associated with the core the holoenzyme is formed, which can initiate transcription.

The enzyme catalyses RNA(n) + a ribonucleoside 5'-triphosphate = RNA(n+1) + diphosphate. In terms of biological role, a non-essential component of RNA polymerase (RNAP). In Listeria monocytogenes serotype 4b (strain CLIP80459), this protein is DNA-directed RNA polymerase subunit epsilon.